Here is a 267-residue protein sequence, read N- to C-terminus: Thiamine thiazole synthase (267 aa).

NAD(+)-binding positions include serine 41, glutamate 60–arginine 61, glycine 68, valine 132, and histidine 160–aspartate 162. Positions 162 and 177 each coordinate Fe cation. Residue methionine 227 coordinates NAD(+). Arginine 237 serves as a coordination point for glycine.

This sequence belongs to the THI4 family. In terms of assembly, homooctamer; tetramer of dimers. The cofactor is Fe(2+).

The catalysed reaction is hydrogen sulfide + glycine + NAD(+) = ADP-5-ethyl-4-methylthiazole-2-carboxylate + nicotinamide + 3 H2O + H(+). It participates in cofactor biosynthesis; thiamine diphosphate biosynthesis. In terms of biological role, involved in the biosynthesis of the thiazole moiety of thiamine. Catalyzes the conversion of NAD and glycine to adenosine diphosphate 5-(2-hydroxyethyl)-4-methylthiazole-2-carboxylate (ADT), an adenylated thiazole intermediate, using free sulfide as a source of sulfur. The chain is Thiamine thiazole synthase from Saccharolobus islandicus (strain L.S.2.15 / Lassen #1) (Sulfolobus islandicus).